The following is a 122-amino-acid chain: MSKLSRKQQTQKRHKRLRRNLSGTESRPRLAVFRSNNHIYAQIIDDDAQNTICAASTLDKDLKASLKVNAGSCDASTAVGELVAKKALSKGIKQVIFDRGGNIYHGRVKALAEAARVAGLNF.

The segment covering 1 to 19 (MSKLSRKQQTQKRHKRLRR) has biased composition (basic residues). The disordered stretch occupies residues 1-27 (MSKLSRKQQTQKRHKRLRRNLSGTESR).

The protein belongs to the universal ribosomal protein uL18 family. Part of the 50S ribosomal subunit; part of the 5S rRNA/L5/L18/L25 subcomplex. Contacts the 5S and 23S rRNAs.

Functionally, this is one of the proteins that bind and probably mediate the attachment of the 5S RNA into the large ribosomal subunit, where it forms part of the central protuberance. The polypeptide is Large ribosomal subunit protein uL18 (Prochlorococcus marinus (strain NATL1A)).